Here is a 349-residue protein sequence, read N- to C-terminus: Phosphoribosylformylglycinamidine cyclo-ligase (349 aa).

Belongs to the AIR synthase family.

Its subcellular location is the cytoplasm. The catalysed reaction is 2-formamido-N(1)-(5-O-phospho-beta-D-ribosyl)acetamidine + ATP = 5-amino-1-(5-phospho-beta-D-ribosyl)imidazole + ADP + phosphate + H(+). Its pathway is purine metabolism; IMP biosynthesis via de novo pathway; 5-amino-1-(5-phospho-D-ribosyl)imidazole from N(2)-formyl-N(1)-(5-phospho-D-ribosyl)glycinamide: step 2/2. This chain is Phosphoribosylformylglycinamidine cyclo-ligase, found in Bordetella pertussis (strain Tohama I / ATCC BAA-589 / NCTC 13251).